Reading from the N-terminus, the 161-residue chain is Anthrone oxygenase tpcL (161 aa).

The N-linked (GlcNAc...) asparagine glycan is linked to asparagine 4. 4 helical membrane-spanning segments follow: residues 15–35 (VITG…DIPV), 56–74 (IGHK…LYGY), 87–107 (LPHI…WLVM), and 136–155 (WAQL…VLGL).

The protein belongs to the anthrone oxygenase family. As to expression, specifically expressed in conidia.

The protein resides in the membrane. It catalyses the reaction emodin anthrone + O2 = emodin + H2O + H(+). It functions in the pathway secondary metabolite biosynthesis. In terms of biological role, anthrone oxygenase; part of the gene cluster that mediates the biosynthesis of trypacidin, a mycotoxin with antiprotozoal activity and that plays a role in the infection process. The pathway begins with the synthesis of atrochrysone thioester by the polyketide synthase (PKS) tpcC. The atrochrysone carboxyl ACP thioesterase tpcB then breaks the thioester bond and releases the atrochrysone carboxylic acid from tpcC. The decarboxylase tpcK converts atrochrysone carboxylic acid to atrochrysone which is further reduced into emodin anthrone. The next step is performed by the emodin anthrone oxygenase tpcL that catalyzes the oxidation of emodinanthrone to emodin. Emodin O-methyltransferase encoded by tpcA catalyzes methylation of the 8-hydroxy group of emodin to form questin. Ring cleavage of questin by questin oxidase tpcI leads to desmethylsulochrin via several intermediates including questin epoxide. Another methylation step catalyzed by tpcM leads to the formation of sulochrin which is further converted to monomethylsulfochrin by tpcH. Finally, the tpcJ catalyzes the conversion of monomethylsulfochrin to trypacidin. Trypacidin is toxic for human pulmonary and bronchial epithelial cells by initiating the intracellular formation of nitric oxide (NO) and hydrogen peroxide (H(2)O(2)), thus triggering host necrotic cell death. The trypacidin pathway is also able to produce endocrocin via a distinct route from the endocrocin Enc pathway. The polypeptide is Anthrone oxygenase tpcL (Aspergillus fumigatus (strain ATCC MYA-4609 / CBS 101355 / FGSC A1100 / Af293) (Neosartorya fumigata)).